Here is a 229-residue protein sequence, read N- to C-terminus: uncharacterized protein (229 aa).

An N-terminal signal peptide occupies residues 1–17 (MKKIIALMLFLTFFAHA).

This is an uncharacterized protein from Escherichia coli O157:H7.